The following is a 598-amino-acid chain: F-box/WD repeat-containing protein 8 (598 aa).

Met1 bears the N-acetylmethionine mark. The interval 17–93 (LAQAQAPKKR…RSPLAREGAG (77 aa)) is disordered. A compositionally biased stretch (basic and acidic residues) spans 29–40 (PEAAERRARRPE). Residues 61–71 (EGAGRPPAARA) are compositionally biased toward low complexity. Phosphoserine is present on residues Ser83 and Ser85. The 47-residue stretch at 113–159 (PFFDIQLPYELAINIFQYLDRKELGRCAQVSKTWKVIAEDEVLWYRL) folds into the F-box domain. WD repeat units follow at residues 201-250 (AVSE…LESE), 259-299 (QPNV…FEHD), 300-340 (ARIQ…AEFE), 341-383 (VPKL…LLYA), 384-429 (HGPP…LKLG), 430-475 (NVLR…SAHQ), 476-513 (LRVS…EVYS), and 514-561 (GHPV…AYEF).

Component of the Cul7-RING(FBXW8) complex consisting of CUL7, RBX1, SKP1 and FBXW8; within the complex interacts with CUL7 and SKP1. Interacts with GLMN isoform 1. Interacts with OBSL1, CUL1, CUL2, CCT6B, PFDN5, CCT2, CCT3, CCT6A, CCT7, VBP1, CCDC8, ARF1, TRIP13, PDCD5 and GORASP1. Interacts with MAP4K1/HPK1 (when autophosphorylated). Associated component of the 3M complex. Interacts with POUF51 (when phosphorylated on 'Ser-355'). In terms of processing, phosphorylation at Ser-85 by mTORC2 promotes FBXW8 stabilization, allowing its translocation to the cytosol in response to insulin.

The protein localises to the cytoplasm. It localises to the perinuclear region. It is found in the golgi apparatus. The protein operates within protein modification; protein ubiquitination. In terms of biological role, substrate-recognition component of the Cul7-RING(FBXW8) ubiquitin ligase complex, which mediates the ubiquitination and subsequent proteasomal degradation of target proteins. The Cul7-RING(FBXW8) complex mediates ubiquitination and consequent degradation of GORASP1, acting as a component of the ubiquitin ligase pathway that regulates Golgi morphogenesis and dendrite patterning in brain. Mediates ubiquitination and degradation of IRS1 in a mTOR-dependent manner: the Cul7-RING(FBXW8) complex recognizes and binds IRS1 previously phosphorylated by S6 kinase (RPS6KB1 or RPS6KB2). The Cul7-RING(FBXW8) complex also mediates ubiquitination of MAP4K1/HPK1: recognizes and binds autophosphorylated MAP4K1/HPK1, leading to its degradation, thereby affecting cell proliferation and differentiation. The Cul7-RING(FBXW8) complex also mediates ubiquitination of phosphorylated cyclin-D1 (CCND1). The Cul7-RING(FBXW8) complex is however not a major regulator of CCND1 stability during the G1/S transition. Associated component of the 3M complex, suggesting that it mediates some of 3M complex functions. The sequence is that of F-box/WD repeat-containing protein 8 from Homo sapiens (Human).